Consider the following 22-residue polypeptide: GLWETIKNFGKTFTLNILDYTK.

As to expression, expressed by the skin glands.

It is found in the secreted. In terms of biological role, has antibacterial activity. The chain is Brevinin-2LTa from Rana latastei (Italian agile frog).